Reading from the N-terminus, the 453-residue chain is Enolase (453 aa).

Glutamine 163 provides a ligand contact to (2R)-2-phosphoglycerate. Glutamate 205 functions as the Proton donor in the catalytic mechanism. Positions 258, 308, and 335 each coordinate Mg(2+). The (2R)-2-phosphoglycerate site is built by lysine 360, arginine 389, serine 390, and lysine 411. The active-site Proton acceptor is lysine 360.

The protein belongs to the enolase family. Requires Mg(2+) as cofactor.

It is found in the cytoplasm. It localises to the secreted. The protein localises to the cell surface. It catalyses the reaction (2R)-2-phosphoglycerate = phosphoenolpyruvate + H2O. Its pathway is carbohydrate degradation; glycolysis; pyruvate from D-glyceraldehyde 3-phosphate: step 4/5. Its function is as follows. Catalyzes the reversible conversion of 2-phosphoglycerate (2-PG) into phosphoenolpyruvate (PEP). It is essential for the degradation of carbohydrates via glycolysis. This is Enolase from Mesoplasma florum (strain ATCC 33453 / NBRC 100688 / NCTC 11704 / L1) (Acholeplasma florum).